We begin with the raw amino-acid sequence, 98 residues long: Co-chaperonin GroES (98 aa).

The protein belongs to the GroES chaperonin family. As to quaternary structure, heptamer of 7 subunits arranged in a ring. Interacts with the chaperonin GroEL.

The protein localises to the cytoplasm. Its function is as follows. Together with the chaperonin GroEL, plays an essential role in assisting protein folding. The GroEL-GroES system forms a nano-cage that allows encapsulation of the non-native substrate proteins and provides a physical environment optimized to promote and accelerate protein folding. GroES binds to the apical surface of the GroEL ring, thereby capping the opening of the GroEL channel. This Neorickettsia sennetsu (strain ATCC VR-367 / Miyayama) (Ehrlichia sennetsu) protein is Co-chaperonin GroES.